The following is a 256-amino-acid chain: Short-chain dehydrogenase/reductase cdmF (256 aa).

Residues Val-11, Asp-57, and Arg-119 each coordinate NADP(+). The Proton donor role is filled by Ser-137. Residues Tyr-151, Lys-155, Gly-183, and Asn-187 each coordinate NADP(+). Residue Tyr-151 is the Proton acceptor of the active site. The Lowers pKa of active site Tyr role is filled by Lys-155.

Belongs to the short-chain dehydrogenases/reductases (SDR) family.

It catalyses the reaction 3-hydroxypentacecilide A + A = chrodrimanin C + AH2. The catalysed reaction is chrodrimanin F + A = chrodrimanin H + AH2. Its pathway is secondary metabolite biosynthesis; terpenoid biosynthesis. In terms of biological role, short-chain dehydrogenase/reductase; part of the gene cluster that mediates the biosynthesis of chrodrimanin B, a meroterpenoid that acts as a potent blocker of insect GABA-gated chloride channels. The first step of the pathway is the biosynthesis of 6-hydroxymellein by the polyketide synthase cdmE. The prenyltransferase cdmH acts as a 6-hydroxymellein 5-farnesyltransferase and produces the hydrophobic metabolite verruculide C. The FAD-dependent monooxygenase cdmI further converts verruculide C into verruculide B. The terpene cyclase cdmG then produced the pentacyclic molecule 3-hydroxypentacecilide A, the backbone structure of chrodrimanin B, via folding the farnesyl moiety of the substrate into the chair-boat conformation. The short-chain dehydrogenase/reductase cdmF functions as the 3-OH dehydrogenase that oxidizes the C-3 hydroxyl group of 3-hydroxypentacecilide A and produces chrodrimanin C, the dehydrogenated product of 3-hydroxypentacecilide A. The cytochrome P450 monooxygenase cdmJ then accepts both 3-hydroxypentacecilide A and chrodrimanin C and functions as a C-7-beta-hydroxylase to produce respectively chrodrimanin H and chrodrimanin F. The dioxygenase cdmA accepts chrodrimanin H to afford chrodrimanin E, which is further transformed to chrodrimanin A by the dioxygenase cdmD. CdmA can also accept chrodrimanin C as substrate to convert it into verruculide A, which is further converted into chrodrimanin T by cdmD. The last step of the biosynthesis is proposed to be performed by the acetyltransferase cdmC which acetylates chrodrimanin A to yield chrodrimanin B. The pathway may also lead to the production of additional shunt products, including chrodrimanins T and U. This Talaromyces verruculosus (Penicillium verruculosum) protein is Short-chain dehydrogenase/reductase cdmF.